The sequence spans 32 residues: Dermaseptin-DA4 (32 aa).

In terms of tissue distribution, expressed by the skin glands.

The protein localises to the secreted. Its subcellular location is the target cell membrane. Antimicrobial peptide with activity against Gram-negative bacteria, but not against Gram-positive bacteria. Active against E.coli (MIC=5 uM), and P.aeruginosa (MIC=40 uM). Acts by disrupting cell membranes. Is able to depolarize membranes of Gram-positive and Gram-negative bacteria. Also acts as a potent chemoattractant for human leukocytes and activates them mainly through a GPCR, possibly FPRL1 coupled to the ERK1/2 MAPK pathway. Is unstructured in water but become helical upon binding to anionic lipids. In contrast to most dermaseptins, is not structured in the presence of zwitterionic lipids. Does not show hemolytic activity. The chain is Dermaseptin-DA4 from Agalychnis dacnicolor (Giant Mexican leaf frog).